The sequence spans 599 residues: Tryptophan 2-C-methyltransferase (599 aa).

The 146-residue stretch at lysine 4–aspartate 149 folds into the B12-binding domain. Residues arginine 167–proline 197 form a disordered region. The span at valine 168 to proline 181 shows a compositional bias: low complexity. The 254-residue stretch at tyrosine 239–aspartate 492 folds into the Radical SAM core domain. Residues cysteine 253, cysteine 257, and cysteine 260 each coordinate [4Fe-4S] cluster.

The cofactor is [4Fe-4S] cluster. Cob(II)alamin is required as a cofactor.

It carries out the reaction L-tryptophan + S-adenosyl-L-methionine = 2-methyl-L-tryptophan + S-adenosyl-L-homocysteine + H(+). Involved in the biosynthetic pathway of the antibiotic thiostrepton A. First, TsrM catalyzes the transfer of a methyl group from S-adenosyl methionine (SAM) to cobalamin, leading to the formation of methylcobalamin (CH3-cobalamin) and S-adenosyl-L-homocysteine (SAH). Then the methyl group is transferred to the C2 position of tryptophan (Trp) with the concerted action of the radical SAM [4Fe-4S] center, leading to the production of methyltryptophan. In Streptomyces laurentii, this protein is Tryptophan 2-C-methyltransferase.